The following is a 270-amino-acid chain: L-fucose dehydrogenase (270 aa).

NAD(+) is bound by residues Arg19, Ile21, Asp40, Lys41, Asp62, Val63, Asn89, Tyr154, Lys158, Ile187, Thr189, and Leu191. The active-site Proton acceptor is the Tyr154.

This sequence belongs to the short-chain dehydrogenases/reductases (SDR) family. Homotetramer. In terms of tissue distribution, highly expressed in brain, placenta, liver and kidney.

The protein resides in the cytoplasm. The enzyme catalyses L-fucose + NAD(+) = L-fucono-1,5-lactone + NADH + H(+). It catalyses the reaction D-arabinose + NAD(+) = D-arabinono-1,5-lactone + NADH + H(+). The catalysed reaction is L-galactose + NAD(+) = L-galactono-1,5-lactone + NADH + H(+). The protein operates within carbohydrate degradation; L-fucose degradation. Functionally, catalyzes the NAD(+)-dependent oxidation of L-fucose, yielding L-fucono-1,5-lactone, which rapidly converts spontaneously to L-fucone-1,4-lactone. Can also act on D-arabinose and L-galactose, with lower catalytic efficiency. Does not use NADPH. May be the initial enzyme of the L-fucose degradation pathway in mammals. This chain is L-fucose dehydrogenase, found in Homo sapiens (Human).